The following is a 327-amino-acid chain: 4-diphosphocytidyl-2-C-methyl-D-erythritol kinase (327 aa).

Residue K14 is part of the active site. 97–107 is a binding site for ATP; sequence PDGAGLGGGSA. Residue D140 is part of the active site.

Belongs to the GHMP kinase family. IspE subfamily.

The enzyme catalyses 4-CDP-2-C-methyl-D-erythritol + ATP = 4-CDP-2-C-methyl-D-erythritol 2-phosphate + ADP + H(+). The protein operates within isoprenoid biosynthesis; isopentenyl diphosphate biosynthesis via DXP pathway; isopentenyl diphosphate from 1-deoxy-D-xylulose 5-phosphate: step 3/6. Catalyzes the phosphorylation of the position 2 hydroxy group of 4-diphosphocytidyl-2C-methyl-D-erythritol. The chain is 4-diphosphocytidyl-2-C-methyl-D-erythritol kinase from Oleidesulfovibrio alaskensis (strain ATCC BAA-1058 / DSM 17464 / G20) (Desulfovibrio alaskensis).